The sequence spans 244 residues: DNA repair protein RecO (244 aa).

The protein belongs to the RecO family.

Functionally, involved in DNA repair and RecF pathway recombination. This chain is DNA repair protein RecO, found in Jannaschia sp. (strain CCS1).